The following is a 287-amino-acid chain: MSLFSPHRILLRTGSAFQLATATRALLSTSSQLRNTKNAQSGLAEQARAEEPVASSPSQTTRPEQKSLEEETTKQTQTHADSTVNEWGARLTDLNINARLPRSVQALYLRPLRRKAEYGLPVCDLQLRSYSVRNLEFFADFAIRAAYYLNLPVSGPVPLPKIVERWTFPRSSFVHKKSQENFERITVRRLIQIKDGNSQAVQAWLAFLRKHAFYGVGMKANIWEHESIEIAKTMDQTLPEIEKALEPHISQFGRREDAEPAHDLITNFLGSERLSLSKGPLTDVRGG.

The N-terminal 33 residues, 1–33 (MSLFSPHRILLRTGSAFQLATATRALLSTSSQL), are a transit peptide targeting the mitochondrion. A compositionally biased stretch (polar residues) spans 33–43 (LRNTKNAQSGL). The segment at 33–84 (LRNTKNAQSGLAEQARAEEPVASSPSQTTRPEQKSLEEETTKQTQTHADSTV) is disordered. The segment covering 63–73 (PEQKSLEEETT) has biased composition (basic and acidic residues). Residues 74–84 (KQTQTHADSTV) show a composition bias toward polar residues.

The protein belongs to the universal ribosomal protein uS10 family. In terms of assembly, part of the mitochondrial small ribosomal subunit.

The protein resides in the mitochondrion. In terms of biological role, involved in mitochondrial genome encoded proteins translation. Involved in the binding of tRNA to the ribosomes. This Emericella nidulans (strain FGSC A4 / ATCC 38163 / CBS 112.46 / NRRL 194 / M139) (Aspergillus nidulans) protein is Small ribosomal subunit protein uS10m (rsm10).